Consider the following 284-residue polypeptide: D-tagatose-1,6-bisphosphate aldolase subunit GatY (284 aa).

Residue aspartate 82 is the Proton donor of the active site. Zn(2+) is bound by residues histidine 83 and histidine 180. Glycine 181 serves as a coordination point for dihydroxyacetone phosphate. Histidine 208 serves as a coordination point for Zn(2+). Dihydroxyacetone phosphate contacts are provided by residues 209-211 and 230-233; these read GAS and NVAT.

This sequence belongs to the class II fructose-bisphosphate aldolase family. TagBP aldolase GatY subfamily. In terms of assembly, forms a complex with GatZ. It depends on Zn(2+) as a cofactor.

The enzyme catalyses D-tagatofuranose 1,6-bisphosphate = D-glyceraldehyde 3-phosphate + dihydroxyacetone phosphate. Its pathway is carbohydrate metabolism; D-tagatose 6-phosphate degradation; D-glyceraldehyde 3-phosphate and glycerone phosphate from D-tagatose 6-phosphate: step 2/2. Functionally, catalytic subunit of the tagatose-1,6-bisphosphate aldolase GatYZ, which catalyzes the reversible aldol condensation of dihydroxyacetone phosphate (DHAP or glycerone-phosphate) with glyceraldehyde 3-phosphate (G3P) to produce tagatose 1,6-bisphosphate (TBP). Requires GatZ subunit for full activity and stability. Is involved in the catabolism of galactitol. This chain is D-tagatose-1,6-bisphosphate aldolase subunit GatY, found in Salmonella choleraesuis (strain SC-B67).